Here is a 66-residue protein sequence, read N- to C-terminus: MAKGKDVRVTVILECTSCVRNSVDKVSRGISRYITQKNRHNTPNRFELKKFCPYCYKHTIHGEIKK.

It belongs to the bacterial ribosomal protein bL33 family.

Its subcellular location is the plastid. It localises to the chloroplast. The chain is Large ribosomal subunit protein bL33c from Solanum bulbocastanum (Wild potato).